Consider the following 354-residue polypeptide: N-acetyl-gamma-glutamyl-phosphate reductase (354 aa).

The active site involves Cys156.

Belongs to the NAGSA dehydrogenase family. Type 1 subfamily.

Its subcellular location is the cytoplasm. The catalysed reaction is N-acetyl-L-glutamate 5-semialdehyde + phosphate + NADP(+) = N-acetyl-L-glutamyl 5-phosphate + NADPH + H(+). The protein operates within amino-acid biosynthesis; L-arginine biosynthesis; N(2)-acetyl-L-ornithine from L-glutamate: step 3/4. Functionally, catalyzes the NADPH-dependent reduction of N-acetyl-5-glutamyl phosphate to yield N-acetyl-L-glutamate 5-semialdehyde. This Bordetella bronchiseptica (strain ATCC BAA-588 / NCTC 13252 / RB50) (Alcaligenes bronchisepticus) protein is N-acetyl-gamma-glutamyl-phosphate reductase.